A 562-amino-acid polypeptide reads, in one-letter code: MFS-type efflux pump elcC (562 aa).

11 helical membrane passes run 50-70 (WVFLIALALFEIGSLICGAAP), 80-100 (VVAGIGSGGLFAGAILLVAEF), 111-131 (GMLGAMYSVASVAGPLMGGAF), 139-159 (LCFYINLPLGVVTAVIVFLLV), 184-204 (LYGLVVLVPTIICILLATQWG), 215-235 (IIALFVVGFVLFVAFVVIEIW), 257-277 (IFSFCLFGSFLVVAYFLPLWF), 288-308 (SGIHNLPSILGTTIFSVAAGG), 309-329 (MVFGLGYYTWACILGSVLAAV), 351-371 (VLYGAGCGFGLNQPLIAIQAA), and 383-403 (VVIFMQTFGGTIAIAVAQNVF). N-linked (GlcNAc...) asparagine glycosylation occurs at Asn448. The chain crosses the membrane as a helical span at residues 455–475 (FYVAVATAGLSMAGSILIPWL). The segment at 515–562 (EIASEDSQSSDIEKVPRNNEVSTYDSQTSEVEKSSVGSTNRKVESIRN) is disordered. Residues 533 to 554 (NEVSTYDSQTSEVEKSSVGSTN) show a composition bias toward polar residues.

It belongs to the major facilitator superfamily. TCR/Tet family.

It localises to the cell membrane. MFS-type efflux pump; part of the gene cluster that mediates the biosynthesis of elsinochrome C, a perelyenequinone phytotoxin structurally similar to cercosporin. The chain is MFS-type efflux pump elcC from Phaeosphaeria nodorum (strain SN15 / ATCC MYA-4574 / FGSC 10173) (Glume blotch fungus).